A 141-amino-acid chain; its full sequence is Hemoglobin subunit alpha-2 (141 aa).

Ser-1 carries the post-translational modification N-acetylserine. The Globin domain occupies 1-141 (SLSTKDKETV…LARALSEKYR (141 aa)). An O2-binding site is contributed by His-59. Residue His-88 coordinates heme b.

This sequence belongs to the globin family. Hb2 is a heterotetramer of two alpha-2 chains and two beta chains. Red blood cells.

Functionally, involved in oxygen transport from gills to the various peripheral tissues. The polypeptide is Hemoglobin subunit alpha-2 (hba2) (Notothenia angustata (Rockcod)).